The primary structure comprises 120 residues: NAD(P)H-quinone oxidoreductase subunit 3, chloroplastic (120 aa).

Helical transmembrane passes span 9–29 (IFWT…SISG), 64–84 (MFAL…PWAM), and 88–108 (VLGV…VVGL).

It belongs to the complex I subunit 3 family. In terms of assembly, NDH is composed of at least 16 different subunits, 5 of which are encoded in the nucleus.

The protein resides in the plastid. It is found in the chloroplast thylakoid membrane. The catalysed reaction is a plastoquinone + NADH + (n+1) H(+)(in) = a plastoquinol + NAD(+) + n H(+)(out). It carries out the reaction a plastoquinone + NADPH + (n+1) H(+)(in) = a plastoquinol + NADP(+) + n H(+)(out). In terms of biological role, NDH shuttles electrons from NAD(P)H:plastoquinone, via FMN and iron-sulfur (Fe-S) centers, to quinones in the photosynthetic chain and possibly in a chloroplast respiratory chain. The immediate electron acceptor for the enzyme in this species is believed to be plastoquinone. Couples the redox reaction to proton translocation, and thus conserves the redox energy in a proton gradient. The polypeptide is NAD(P)H-quinone oxidoreductase subunit 3, chloroplastic (Hordeum vulgare (Barley)).